We begin with the raw amino-acid sequence, 325 residues long: Olfactory receptor 10AC1 (325 aa).

Residues 1-26 (MDSPSNATVPCGFLLQGFSEFPHLRP) are Extracellular-facing. Asn6 carries an N-linked (GlcNAc...) asparagine glycan. Residues 27–47 (VLFLLLLGVHLATLGGNLLIL) form a helical membrane-spanning segment. At 48 to 57 (VAVASMPSRQ) the chain is on the cytoplasmic side. Residues 58–78 (PMLLFLCQLSAIELCYTLVVV) form a helical membrane-spanning segment. Residues 79-101 (PRSLVDLSTPGHRRGSPISFLSC) lie on the Extracellular side of the membrane. The helical transmembrane segment at 102-122 (AFQMQMFVALGGAECFLLAAM) threads the bilayer. Residues 123-147 (AYDRYVAICHPLRYAAVVTPGLCAR) lie on the Cytoplasmic side of the membrane. The helical transmembrane segment at 148–168 (LALACCLRGLAVSVGLTVAIF) threads the bilayer. Residues 169-171 (HLP) lie on the Extracellular side of the membrane. The helical transmembrane segment at 172 to 192 (FCGSRLLLHFFCDITALLHLA) threads the bilayer. Topologically, residues 193–200 (CTRSYADE) are cytoplasmic. Residues 201–221 (LPLLGACLVLLLLPSVLILAS) traverse the membrane as a helical segment. Residues 222-243 (YGAIAAALRRLRCPKGRGKAAS) lie on the Extracellular side of the membrane. The chain crosses the membrane as a helical span at residues 244-264 (TCALHLAVTFLHYGCATFMYV). Residues 265–325 (RPRASYSPRL…QAPGGDLREL (61 aa)) lie on the Cytoplasmic side of the membrane.

Belongs to the G-protein coupled receptor 1 family.

The protein localises to the cell membrane. Its function is as follows. Odorant receptor. This is Olfactory receptor 10AC1 (OR10AC1) from Homo sapiens (Human).